A 203-amino-acid polypeptide reads, in one-letter code: MLTEQQRRELDWEKTDGLMPVIVQHAVSGEVLMLGYMNPEALDKTIESGKVTFFSRTKQRLWIKGETSGNFLNVVSIAPDCDNDTLLVLANPIGPTCHKGTSSCFGNTAHQWLFLYQLEQLLAERKYADPETSYTAKLYASGTKRIAQKVGEEGVETALAATVHDRFELTNEASDLMYHLLVLLQDQDLDLTTVIENLHKRHQ.

The phosphoribosyl-AMP cyclohydrolase stretch occupies residues 1–114 (MLTEQQRREL…FGNTAHQWLF (114 aa)). Residues 115-203 (LYQLEQLLAE…VIENLHKRHQ (89 aa)) form a phosphoribosyl-ATP pyrophosphohydrolase region.

In the N-terminal section; belongs to the PRA-CH family. The protein in the C-terminal section; belongs to the PRA-PH family.

It is found in the cytoplasm. The catalysed reaction is 1-(5-phospho-beta-D-ribosyl)-ATP + H2O = 1-(5-phospho-beta-D-ribosyl)-5'-AMP + diphosphate + H(+). The enzyme catalyses 1-(5-phospho-beta-D-ribosyl)-5'-AMP + H2O = 1-(5-phospho-beta-D-ribosyl)-5-[(5-phospho-beta-D-ribosylamino)methylideneamino]imidazole-4-carboxamide. The protein operates within amino-acid biosynthesis; L-histidine biosynthesis; L-histidine from 5-phospho-alpha-D-ribose 1-diphosphate: step 2/9. It participates in amino-acid biosynthesis; L-histidine biosynthesis; L-histidine from 5-phospho-alpha-D-ribose 1-diphosphate: step 3/9. The polypeptide is Histidine biosynthesis bifunctional protein HisIE (hisI) (Shigella flexneri).